The primary structure comprises 681 residues: Threonine--tRNA ligase (681 aa).

Positions Lys3–Thr97 constitute a TGS domain. The interval Asp279–Pro576 is catalytic. Zn(2+) contacts are provided by Cys372, His423, and His553.

This sequence belongs to the class-II aminoacyl-tRNA synthetase family. As to quaternary structure, homodimer. Zn(2+) serves as cofactor.

It is found in the cytoplasm. It catalyses the reaction tRNA(Thr) + L-threonine + ATP = L-threonyl-tRNA(Thr) + AMP + diphosphate + H(+). In terms of biological role, catalyzes the attachment of threonine to tRNA(Thr) in a two-step reaction: L-threonine is first activated by ATP to form Thr-AMP and then transferred to the acceptor end of tRNA(Thr). Also edits incorrectly charged L-seryl-tRNA(Thr). The polypeptide is Threonine--tRNA ligase (Acidobacterium capsulatum (strain ATCC 51196 / DSM 11244 / BCRC 80197 / JCM 7670 / NBRC 15755 / NCIMB 13165 / 161)).